We begin with the raw amino-acid sequence, 99 residues long: Class II hydrophobin 3 (99 aa).

An N-terminal signal peptide occupies residues 1–18 (MRIDILATAALLAQLASA). 3 disulfide bridges follow: C31-C79, C40-C70, and C41-C53.

This sequence belongs to the cerato-ulmin hydrophobin family. Homodimer. Homodimers further self-assemble to form highly ordered films at water-air interfaces through intermolecular interactions.

The protein localises to the secreted. It is found in the cell wall. Functionally, aerial growth, conidiation, and dispersal of filamentous fungi in the environment rely upon a capability of their secreting small amphipathic proteins called hydrophobins (HPBs) with low sequence identity. Class I can self-assemble into an outermost layer of rodlet bundles on aerial cell surfaces, conferring cellular hydrophobicity that supports fungal growth, development and dispersal; whereas Class II form highly ordered films at water-air interfaces through intermolecular interactions but contribute nothing to the rodlet structure. Hyd3 is a class II hydrophobin required for barley root colonization. Hyd1 and Hyd3 are jointly required for conidial hydrophobicity and dispersal, but seem not to be involved in mycelia hydrophobicity. Inhibits conidial germination in environments not suitable for mycelial growth. Plays probably a role in intraspecific signaling or hyphal fusion. The chain is Class II hydrophobin 3 from Bionectria ochroleuca (Gliocladium roseum).